Here is a 153-residue protein sequence, read N- to C-terminus: Large ribosomal subunit protein bL27m (153 aa).

The N-terminal 37 residues, 1-37 (MINQGLFIRVNNFQLLKASLAYKKASNILTFPPIRTS), are a transit peptide targeting the mitochondrion. The disordered stretch occupies residues 34 to 57 (IRTSTKHGGGSSKNTGDSAGRRLG).

This sequence belongs to the bacterial ribosomal protein bL27 family. In terms of assembly, component of the mitochondrial large ribosomal subunit (mt-LSU). Mature yeast 74S mitochondrial ribosomes consist of a small (37S) and a large (54S) subunit. The 37S small subunit contains a 15S ribosomal RNA (15S mt-rRNA) and at least 32 different proteins. The 54S large subunit contains a 21S rRNA (21S mt-rRNA) and at least 45 different proteins.

It is found in the mitochondrion. Its function is as follows. Component of the mitochondrial ribosome (mitoribosome), a dedicated translation machinery responsible for the synthesis of mitochondrial genome-encoded proteins, including at least some of the essential transmembrane subunits of the mitochondrial respiratory chain. The mitoribosomes are attached to the mitochondrial inner membrane and translation products are cotranslationally integrated into the membrane. The protein is Large ribosomal subunit protein bL27m (mrp7) of Schizosaccharomyces pombe (strain 972 / ATCC 24843) (Fission yeast).